The chain runs to 99 residues: Protein AC150 (99 aa).

One can recognise a Chitin-binding type-2 domain in the interval glycine 38 to alanine 96. A disulfide bridge links cysteine 73 with cysteine 86.

It is found in the host nucleus. The protein localises to the virion. Its function is as follows. Plays a role in primary oral infection of the host. This is Protein AC150 from Autographa californica nuclear polyhedrosis virus (AcMNPV).